The following is a 192-amino-acid chain: Ciliary microtubule inner protein 3 (192 aa).

A disordered region spans residues 24–108 (RAGAEGGPSL…SGQKVKAPHR (85 aa)). Residues 55 to 64 (APRRPPRPRT) show a composition bias toward basic residues.

The protein belongs to the CIMIP3-like family. In terms of tissue distribution, detected in the sperm flagellum (at protein level).

The protein localises to the cytoplasm. It is found in the cytoskeleton. The protein resides in the flagellum axoneme. The sequence is that of Ciliary microtubule inner protein 3 from Bos taurus (Bovine).